Consider the following 1315-residue polypeptide: Chaoptin (1315 aa).

The first 29 residues, Met1–Ala29, serve as a signal peptide directing secretion. N-linked (GlcNAc...) (high mannose) asparagine; alternate glycosylation occurs at Asn77. An N-linked (GlcNAc...) (paucimannose) asparagine; alternate glycan is attached at Asn77. LRR repeat units lie at residues Lys80 to Ser101, Gly103 to Gly124, Ser128 to His149, Lys152 to Gly173, Ser177 to Gly198, Ile201 to Asp222, Arg226 to Pro247, Ser250 to Glu271, and Asn279 to Tyr300. N-linked (GlcNAc...) (paucimannose) asparagine; alternate glycosylation occurs at Asn267. Asn267 carries N-linked (GlcNAc...) (complex) asparagine; alternate glycosylation. The N-linked (GlcNAc...) (high mannose) asparagine; alternate glycan is linked to Asn305. A glycan (N-linked (GlcNAc...) (paucimannose) asparagine; alternate) is linked at Asn305. 27 LRR repeats span residues Arg326–Ser347, Ser351–Asn372, Val375–Asn396, Thr401–Thr424, Gly477–Glu498, Ser527–Phe548, Asn551–Gly572, Lys577–Asp598, Ala601–Asn622, Glu625–Asn646, Lys649–Gln670, Asn676–Ser696, Asn708–Pro729, Ser733–Asn754, His757–Asn778, Gln781–Pro802, Gly805–Asn826, Gly828–Ser849, Thr854–Asn875, Ser879–Thr900, Lys903–Gly924, Ser928–Lys948, Tyr949–Asn970, Asn973–Leu994, His996–Gly1017, Asp1021–Pro1044, and His1045–Leu1066. Residue Asn361 is glycosylated (N-linked (GlcNAc...) (high mannose) asparagine). A glycan (N-linked (GlcNAc...) asparagine) is linked at Asn422. Asn680 is a glycosylation site (N-linked (GlcNAc...) (high mannose) asparagine). The N-linked (GlcNAc...) (high mannose) asparagine; alternate glycan is linked to Asn692. N-linked (GlcNAc...) (paucimannose) asparagine; alternate glycosylation is present at Asn692. Asn718 carries an N-linked (GlcNAc...) (high mannose) asparagine glycan. N-linked (GlcNAc...) asparagine glycosylation occurs at Asn746. Asn936 carries an N-linked (GlcNAc...) (high mannose) asparagine glycan. Residue Asn970 is glycosylated (N-linked (GlcNAc...) (paucimannose) asparagine). An N-linked (GlcNAc...) (complex) asparagine glycan is attached at Asn1012. Asn1122, Asn1152, and Asn1171 each carry an N-linked (GlcNAc...) (high mannose) asparagine glycan. In terms of domain architecture, LRRCT spans Thr1211–Asn1274.

It belongs to the chaoptin family. As to expression, expressed in photoreceptor cells and their axons in the adult retina, the ocellus and larval photoreceptor organ.

The protein localises to the cell membrane. Its function is as follows. Required for photoreceptor cell morphogenesis. Mediates homophilic cellular adhesion. The chain is Chaoptin (chp) from Drosophila melanogaster (Fruit fly).